Here is a 252-residue protein sequence, read N- to C-terminus: Neurexophilin-3 (252 aa).

The signal sequence occupies residues 1-22; it reads MQLTRCCFVFLVQGSLYLVICG. The interval 23–75 is II; sequence QEDGPPGSEDPEHDDHEGQPRPRVPRKRGHISPKSRPLANSTLLGLLAPPGEV. A disordered region spans residues 27 to 59; that stretch reads PPGSEDPEHDDHEGQPRPRVPRKRGHISPKSRP. The segment covering 45–55 has biased composition (basic residues); it reads RVPRKRGHISP. 4 N-linked (GlcNAc...) asparagine glycosylation sites follow: asparagine 62, asparagine 127, asparagine 137, and asparagine 143. An III region spans residues 76–157; sequence WGILGQPPNR…LVPPSKAVEF (82 aa). Positions 158-166 are IV (linker domain); that stretch reads HQEQQIFIE. Positions 167-252 are v (Cys-rich); the sequence is AKASKIFNCR…HSDTPYYPSG (86 aa).

The protein belongs to the neurexophilin family. Post-translationally, may be proteolytically processed at the boundary between the N-terminal non-conserved and the central conserved domain in neuron-like cells. As to expression, brain. Detected in several other tissues.

The protein resides in the secreted. Its function is as follows. May be signaling molecules that resemble neuropeptides. Ligand for alpha-neurexins. This Rattus norvegicus (Rat) protein is Neurexophilin-3 (Nxph3).